A 78-amino-acid chain; its full sequence is D-alanyl carrier protein (78 aa).

Residues 1 to 78 form the Carrier domain; sequence MAFRENVLEI…MIITQLEALK (78 aa). At S36 the chain carries O-(pantetheine 4'-phosphoryl)serine.

Belongs to the DltC family. In terms of processing, 4'-phosphopantetheine is transferred from CoA to a specific serine of apo-DCP.

The protein localises to the cytoplasm. It functions in the pathway cell wall biogenesis; lipoteichoic acid biosynthesis. Carrier protein involved in the D-alanylation of lipoteichoic acid (LTA). The loading of thioester-linked D-alanine onto DltC is catalyzed by D-alanine--D-alanyl carrier protein ligase DltA. The DltC-carried D-alanyl group is further transferred to cell membrane phosphatidylglycerol (PG) by forming an ester bond, probably catalyzed by DltD. D-alanylation of LTA plays an important role in modulating the properties of the cell wall in Gram-positive bacteria, influencing the net charge of the cell wall. The sequence is that of D-alanyl carrier protein from Listeria monocytogenes serotype 4b (strain CLIP80459).